Consider the following 297-residue polypeptide: Homoserine kinase (297 aa).

85 to 95 (PPTRGMGSSSA) is an ATP binding site.

This sequence belongs to the GHMP kinase family. Homoserine kinase subfamily.

It is found in the cytoplasm. The enzyme catalyses L-homoserine + ATP = O-phospho-L-homoserine + ADP + H(+). Its pathway is amino-acid biosynthesis; L-threonine biosynthesis; L-threonine from L-aspartate: step 4/5. Its function is as follows. Catalyzes the ATP-dependent phosphorylation of L-homoserine to L-homoserine phosphate. This Desulfitobacterium hafniense (strain DSM 10664 / DCB-2) protein is Homoserine kinase.